Consider the following 298-residue polypeptide: tRNA dimethylallyltransferase (298 aa).

10–17 (GPTASGKT) contacts ATP. Substrate is bound at residue 12 to 17 (TASGKT). The tract at residues 35 to 38 (DSMC) is interaction with substrate tRNA.

This sequence belongs to the IPP transferase family. As to quaternary structure, monomer. The cofactor is Mg(2+).

The catalysed reaction is adenosine(37) in tRNA + dimethylallyl diphosphate = N(6)-dimethylallyladenosine(37) in tRNA + diphosphate. Catalyzes the transfer of a dimethylallyl group onto the adenine at position 37 in tRNAs that read codons beginning with uridine, leading to the formation of N6-(dimethylallyl)adenosine (i(6)A). This Hydrogenobaculum sp. (strain Y04AAS1) protein is tRNA dimethylallyltransferase.